The following is a 189-amino-acid chain: Probable UbiX-like flavin prenyltransferase (189 aa).

FMN-binding positions include Gly-9–Ser-11, Ser-36, Ser-87–Thr-90, and Arg-122.

The protein belongs to the UbiX/PAD1 family. YclB subfamily. Homododecamer.

It carries out the reaction dimethylallyl phosphate + FMNH2 = prenylated FMNH2 + phosphate. In terms of biological role, involved in the non-oxidative decarboxylation and detoxification of phenolic derivatives under anaerobic conditions. Flavin prenyltransferase that catalyzes the synthesis of the prenylated FMN cofactor (prenyl-FMN) for phenolic acid decarboxylase. This is Probable UbiX-like flavin prenyltransferase from Sedimentibacter hydroxybenzoicus (Clostridium hydroxybenzoicum).